A 267-amino-acid polypeptide reads, in one-letter code: 4-hydroxy-tetrahydrodipicolinate reductase (267 aa).

Residues 12–17 (GPRGRM), 100–102 (GTT), and 126–129 (APNF) contribute to the NAD(+) site. Catalysis depends on histidine 156, which acts as the Proton donor/acceptor. Residue histidine 157 coordinates (S)-2,3,4,5-tetrahydrodipicolinate. The Proton donor role is filled by lysine 160. 166 to 167 (GT) is a (S)-2,3,4,5-tetrahydrodipicolinate binding site.

This sequence belongs to the DapB family.

The protein localises to the cytoplasm. It catalyses the reaction (S)-2,3,4,5-tetrahydrodipicolinate + NAD(+) + H2O = (2S,4S)-4-hydroxy-2,3,4,5-tetrahydrodipicolinate + NADH + H(+). The catalysed reaction is (S)-2,3,4,5-tetrahydrodipicolinate + NADP(+) + H2O = (2S,4S)-4-hydroxy-2,3,4,5-tetrahydrodipicolinate + NADPH + H(+). It functions in the pathway amino-acid biosynthesis; L-lysine biosynthesis via DAP pathway; (S)-tetrahydrodipicolinate from L-aspartate: step 4/4. Catalyzes the conversion of 4-hydroxy-tetrahydrodipicolinate (HTPA) to tetrahydrodipicolinate. This Bacillus velezensis (strain DSM 23117 / BGSC 10A6 / LMG 26770 / FZB42) (Bacillus amyloliquefaciens subsp. plantarum) protein is 4-hydroxy-tetrahydrodipicolinate reductase.